The sequence spans 40 residues: Photosystem II reaction center protein J (40 aa).

The helical transmembrane segment at 8–28 (IPLWIIGTVTGILVIGLIGIF) threads the bilayer.

Belongs to the PsbJ family. PSII is composed of 1 copy each of membrane proteins PsbA, PsbB, PsbC, PsbD, PsbE, PsbF, PsbH, PsbI, PsbJ, PsbK, PsbL, PsbM, PsbT, PsbX, PsbY, PsbZ, Psb30/Ycf12, at least 3 peripheral proteins of the oxygen-evolving complex and a large number of cofactors. It forms dimeric complexes.

It is found in the plastid. It localises to the chloroplast thylakoid membrane. Functionally, one of the components of the core complex of photosystem II (PSII). PSII is a light-driven water:plastoquinone oxidoreductase that uses light energy to abstract electrons from H(2)O, generating O(2) and a proton gradient subsequently used for ATP formation. It consists of a core antenna complex that captures photons, and an electron transfer chain that converts photonic excitation into a charge separation. The polypeptide is Photosystem II reaction center protein J (Eucalyptus globulus subsp. globulus (Tasmanian blue gum)).